Reading from the N-terminus, the 115-residue chain is Protein translation factor SUI1 homolog (115 aa).

The protein belongs to the SUI1 family. Expressed in all tissues examined.

Its function is as follows. Probably involved in translation. This chain is Protein translation factor SUI1 homolog (GOS2), found in Oryza sativa subsp. indica (Rice).